A 66-amino-acid polypeptide reads, in one-letter code: Large ribosomal subunit protein uL29 (66 aa).

Belongs to the universal ribosomal protein uL29 family.

The polypeptide is Large ribosomal subunit protein uL29 (Rhizobium leguminosarum bv. trifolii (strain WSM2304)).